We begin with the raw amino-acid sequence, 144 residues long: Transcription antitermination protein NusB (144 aa).

Belongs to the NusB family.

Its function is as follows. Involved in transcription antitermination. Required for transcription of ribosomal RNA (rRNA) genes. Binds specifically to the boxA antiterminator sequence of the ribosomal RNA (rrn) operons. The polypeptide is Transcription antitermination protein NusB (Streptomyces avermitilis (strain ATCC 31267 / DSM 46492 / JCM 5070 / NBRC 14893 / NCIMB 12804 / NRRL 8165 / MA-4680)).